Here is a 223-residue protein sequence, read N- to C-terminus: Ribonuclease 3 (223 aa).

Positions 3–125 constitute an RNase III domain; sequence LEKLQKKLGH…LIAAIYLDAG (123 aa). A Mg(2+)-binding site is contributed by glutamate 38. Aspartate 42 is a catalytic residue. Mg(2+) is bound by residues aspartate 111 and glutamate 114. The active site involves glutamate 114. A DRBM domain is found at 152-222; sequence DPKTRLQEFL…AQQAIEKLKI (71 aa).

Belongs to the ribonuclease III family. As to quaternary structure, homodimer. Mg(2+) is required as a cofactor.

Its subcellular location is the cytoplasm. It carries out the reaction Endonucleolytic cleavage to 5'-phosphomonoester.. Its function is as follows. Digests double-stranded RNA. Involved in the processing of primary rRNA transcript to yield the immediate precursors to the large and small rRNAs (23S and 16S). Processes some mRNAs, and tRNAs when they are encoded in the rRNA operon. Processes pre-crRNA and tracrRNA of type II CRISPR loci if present in the organism. In Histophilus somni (strain 2336) (Haemophilus somnus), this protein is Ribonuclease 3.